The chain runs to 341 residues: Major histocompatibility complex class I-related protein 1 (341 aa).

Positions 1 to 22 (MGELMAFLLPLIIVLMVKHSDS) are cleaved as a signal peptide. The interval 23-109 (RTHSLRYFRL…KRLQRHYNHS (87 aa)) is alpha-1. Residues 23–201 (RTHSLRYFRL…EYGKDTLQRT (179 aa)) are antigen-binding cleft. At 23–302 (RTHSLRYFRL…QESETIPLVM (280 aa)) the chain is on the extracellular side. The 5-(2-oxoethylideneamino)-6-(D-ribitylamino)uracil site is built by R31, S46, and K65. 5-(2-oxopropylideneamino)-6-(D-ribitylamino)uracil is bound by residues R31, S46, and K65. 3 residues coordinate 7-hydroxy-6-methyl-8-(1-D-ribityl)lumazine: R31, S46, and K65. R31 is a binding site for 8-(9H-purin-6-yl)-2-oxa-8-azabicyclo[3.3.1]nona-3,6-diene-4,6-dicarbaldehyde. Positions 65 and 80 each coordinate 8-(9H-purin-6-yl)-2-oxa-8-azabicyclo[3.3.1]nona-3,6-diene-4,6-dicarbaldehyde. K65 contributes to the 2-amino-4-oxopteridine-6-carbaldehyde binding site. K65 provides a ligand contact to pyridoxal. N-linked (GlcNAc...) asparagine glycosylation is present at N107. Positions 110–201 (GSHTYQRMIG…EYGKDTLQRT (92 aa)) are alpha-2. 5-(2-oxoethylideneamino)-6-(D-ribitylamino)uracil is bound by residues R116, Y174, and Q175. Residues R116, Y174, and Q175 each coordinate 5-(2-oxopropylideneamino)-6-(D-ribitylamino)uracil. The 7-hydroxy-6-methyl-8-(1-D-ribityl)lumazine site is built by R116, Y174, and Q175. R116 provides a ligand contact to 8-(9H-purin-6-yl)-2-oxa-8-azabicyclo[3.3.1]nona-3,6-diene-4,6-dicarbaldehyde. 2 disulfide bridges follow: C120/C183 and C222/C278. The segment at 202–293 (EPPLVRVNRK…GVHMVLQVPQ (92 aa)) is alpha-3. An Ig-like C1-type domain is found at 203–299 (PPLVRVNRKE…QVPQESETIP (97 aa)). Residues 294–302 (ESETIPLVM) are connecting peptide. The helical transmembrane segment at 303–323 (KAVSGSIVLVIVLAGVGVLVW) threads the bilayer. The Cytoplasmic portion of the chain corresponds to 324–341 (RRRPREQNGAIYLPTPDR).

This sequence belongs to the MHC class I family. Heterotrimer that consists of MR1, B2M and a metabolite antigen. Major classes of metabolite ligands presented by MR1 include riboflavin-related antigens, pyrimidines and ribityl lumazines, nucleobase adducts and folate derivatives. Forms reversible covalent Schiff base complexes with microbial pyrimidine-based metabolite, which serves as a molecular switch triggering complete folding, stable association with B2M and translocation of the ternary complex from endoplasmic reticulum to the plasma membrane. Alternatively, forms non-Schiff base complexes with ribityl lumazines. On antigen-presenting cells, the ternary complex interacts with TCR on MR1-restricted T cells, predominantly represented by CD8-positive and CD4- and CD8-double negative MAIT cell subsets. Interacts with TAPBP and TAPBPL chaperones in the endoplasmic reticulum. TAPBP associated or not with MHC class I peptide loading complex binds ligand-free MR1 or MR1-B2M complex, providing for stable MR1 pools ready for metabolite antigen processing. TAPBPL interacts with MR1 in a ligand-independent way; this interaction may stabilize MR1 pool and facilitate ligand loading and dissociation. MR1-B2M heterodimer adopts a topology similar to classical MHC class I molecules, with alpha-1 and alpha-2 domains of MR1 forming the antigen-binding cleft composed of two alpha-helices resting on a floor of 7-stranded anti-parallel beta-pleated sheet. The ribityl moiety of pyrimidine-based antigens is recognized by Tyr-95 residue in the CDR3 alpha loop of the invariant TRAV1-2 TCR. In terms of assembly, homodimerizes and does not associate with B2M. N-glycosylated. Ubiquitous. Low expression is detected in peripheral blood B cells, T cells, monocytes and in bronchial epithelial cells (at protein level). Expressed in plasmablasts or plasma B cells in the lamina propria of ileum, appendix and colon (at protein level). Highly expressed on a subset of CD45-positive CD3-positive thymocytes (at protein level).

The protein localises to the cell membrane. Its subcellular location is the endoplasmic reticulum membrane. It is found in the golgi apparatus membrane. The protein resides in the early endosome membrane. It localises to the late endosome membrane. The protein localises to the secreted. With respect to regulation, inhibited by pterin-based metabolites such as 6-formylpterin (6-FP, a product of folic acid photodegradation). 6-FP competitively inhibits MAIT cell activation by 5-OP-RU. Modulated by commonly prescribed anti-inflammatory drug metabolites. Inhibited by salicilates such as 3-formylsalicylic and 5-formylsalicylic acids. Activated by diclofenac and/or its hydroxy metabolites. In terms of biological role, antigen-presenting molecule specialized in displaying microbial pyrimidine-based metabolites to alpha-beta T cell receptors (TCR) on innate-type mucosal-associated invariant T (MAIT) cells. In complex with B2M preferentially presents riboflavin-derived metabolites to semi-invariant TRAV1.2 TCRs on MAIT cells, guiding immune surveillance of the microbial metabolome at mucosal epithelial barriers. Signature pyrimidine-based microbial antigens are generated via non-enzymatic condensation of metabolite intermediates of the riboflavin pathway with by-products arising from other metabolic pathways such as glycolysis. Typical potent antigenic metabolites are 5-(2-oxoethylideneamino)-6-D-ribitylaminouracil (5-OE-RU) and 5-(2-oxopropylideneamino)-6-D-ribitylaminouracil (5-OP-RU), products of condensation of 5-amino-6-D-ribityaminouracil (5-A-RU) with glyoxal or methylglyoxal by-products, respectively. May present microbial antigens to various TRAV1-2-negative MAIT cell subsets, providing for unique recognition of diverse microbes, including pathogens that do not synthesize riboflavin. Upon antigen recognition, elicits rapid innate-type MAIT cell activation to eliminate pathogenic microbes by directly killing infected cells. During T cell development, drives thymic selection and post-thymic terminal differentiation of MAIT cells in a process dependent on commensal microflora. Acts as an immune sensor of cancer cell metabolome. May present a tumor-specific or -associated metabolite essential for cancer cell survival to a 'pan-cancer' TCR consisting of TRAV38.2-DV8*TRAJ31 alpha chain paired with a TRBV25.1*TRBJ2.3 beta chain on a non-MAIT CD8-positive T cell clone (MC.7.G5), triggering T cell-mediated killing of a wide range of cancer cell types. Functionally, allele MR1*01: Presents microbial-derived metabolite 5-OP-RU to semi-invariant TRAV1.2-TRAJ33-TRBV6.1 (A-F7) TCR on MAIT cells. Presents nucleobase carbonyl adducts generated during oxidative stress. Captures M3Ade, a nucleobase adduct composed of one adenine modified by a malondialdehyde trimer, for recognition by MR1-restricted T cell clones expressing a polyclonal TCR repertoire. Displays moderate binding affinity toward tumor-enriched pyridoxal and pyridoxal 5'-phosphate antigens. Allele MR1*04: Presents tumor-enriched metabolite pyridoxal to pan-cancer 7.G5 TCR on T cells enabling preferential recognition of cancer cells. May act as an alloantigen. The chain is Major histocompatibility complex class I-related protein 1 from Homo sapiens (Human).